Here is a 589-residue protein sequence, read N- to C-terminus: Sulfite reductase [NADPH] hemoprotein beta-component (589 aa).

[4Fe-4S] cluster is bound by residues cysteine 443, cysteine 449, cysteine 488, and cysteine 492. Cysteine 492 contacts siroheme.

Belongs to the nitrite and sulfite reductase 4Fe-4S domain family. As to quaternary structure, alpha(8)-beta(8). The alpha component is a flavoprotein, the beta component is a hemoprotein. It depends on siroheme as a cofactor. [4Fe-4S] cluster serves as cofactor.

It carries out the reaction hydrogen sulfide + 3 NADP(+) + 3 H2O = sulfite + 3 NADPH + 4 H(+). It participates in sulfur metabolism; hydrogen sulfide biosynthesis; hydrogen sulfide from sulfite (NADPH route): step 1/1. In terms of biological role, component of the sulfite reductase complex that catalyzes the 6-electron reduction of sulfite to sulfide. This is one of several activities required for the biosynthesis of L-cysteine from sulfate. The sequence is that of Sulfite reductase [NADPH] hemoprotein beta-component from Neisseria meningitidis serogroup C (strain 053442).